A 159-amino-acid polypeptide reads, in one-letter code: Ubiquitin-like protein ATG12 (159 aa).

The tract at residues 1 to 40 is disordered; that stretch reads MASPQPPFGGGSNSNSNTASPSNNLSPTASPLLEGRDSPN. Positions 13-27 are enriched in low complexity; the sequence is NSNSNTASPSNNLSP. Residue Gly159 forms a Glycyl lysine isopeptide (Gly-Lys) (interchain with K-218 in ATG5) linkage.

This sequence belongs to the ATG12 family. As to quaternary structure, forms a conjugate with ATG5. Forms a thioester bond with the 'Cys-116' of ATG10. Interacts with the ATG7 C-terminal 40 amino acids domain. The ATG12-ATG5 conjugate forms a complex with several units of ATG16. The ATG12-ATG5 conjugate also associates with ATG3.

Its subcellular location is the preautophagosomal structure membrane. The protein resides in the cytoplasm. In terms of biological role, ubiquitin-like protein involved in cytoplasm to vacuole transport (Cvt), autophagy vesicles formation, mitophagy, and nucleophagy. Conjugation with ATG5 through a ubiquitin-like conjugating system involving also ATG7 as an E1-like activating enzyme and ATG10 as an E2-like conjugating enzyme, is essential for its function. The ATG12-ATG5 conjugate acts as an E3-like enzyme which is required for lipidation of ATG8 and ATG8 association to the vesicle membranes. ATG12-ATG5 rearranges the ATG3 catalytic center and enhances its E2 activity. Plays a role in sexual development and perithecia formation. The sequence is that of Ubiquitin-like protein ATG12 from Sordaria macrospora (strain ATCC MYA-333 / DSM 997 / K(L3346) / K-hell).